A 417-amino-acid polypeptide reads, in one-letter code: Gamma-glutamyl phosphate reductase (417 aa).

Belongs to the gamma-glutamyl phosphate reductase family.

The protein resides in the cytoplasm. It carries out the reaction L-glutamate 5-semialdehyde + phosphate + NADP(+) = L-glutamyl 5-phosphate + NADPH + H(+). The protein operates within amino-acid biosynthesis; L-proline biosynthesis; L-glutamate 5-semialdehyde from L-glutamate: step 2/2. Functionally, catalyzes the NADPH-dependent reduction of L-glutamate 5-phosphate into L-glutamate 5-semialdehyde and phosphate. The product spontaneously undergoes cyclization to form 1-pyrroline-5-carboxylate. The polypeptide is Gamma-glutamyl phosphate reductase (Heliobacterium modesticaldum (strain ATCC 51547 / Ice1)).